The following is a 466-amino-acid chain: Tyrosinase HcTyr1 (466 aa).

Cu cation is bound by residues His43, His78, His87, His211, His215, and His238.

Belongs to the tyrosinase family. In terms of assembly, monomer. Formation of a dimer is observed when the protein is in its holo-form. Requires Cu(2+) as cofactor. In vitro, the C-terminal lid-domain is slowly cleaved off in an autoprocessive time dependent manner, leading to the formation of cleaved-HcTyr1. The processing rate is not influenced by factors such as pH and added metal ions.

The enzyme catalyses L-tyrosine + O2 = L-dopaquinone + H2O. The catalysed reaction is 2 L-tyrosine + O2 = 2 L-dopa. It catalyses the reaction 2 L-dopa + O2 = 2 L-dopaquinone + 2 H2O. With respect to regulation, cleavage of the lid-domain increases activity levels, affinity for substrate and turnover rate. Exhibits high saline tolerance. Functionally, copper-containing oxidase that catalyzes the conversion of L-tyrosine to L-dopa and then to L-dopaquinone. Can use various phenols such as p-coumaric acid, phenol, pyrocatechol, syringol or pyrogallol. Accepts several of the constituents of lignin and potentially participates in lignin functionalization. In Hahella sp. (strain CCB-MM4), this protein is Tyrosinase HcTyr1.